Reading from the N-terminus, the 791-residue chain is Nuclear cap-binding protein subunit 1-A (791 aa).

Residues 1-24 form a disordered region; it reads MSRRRHSDENDGGQAHKRRKTSEP. The 213-residue stretch at 28-240 folds into the MIF4G domain; that stretch reads EDRLESLICR…CLWAQIQKLK (213 aa). Positions 641–714 form a coiled coil; that stretch reads LHSTIRKMNK…SEQKNLFLVI (74 aa). The tract at residues 664-687 is disordered; sequence QRLAKQHKHRDSDDNDEDSGRKDG.

This sequence belongs to the NCBP1 family. Component of the nuclear cap-binding complex (CBC), a heterodimer composed of ncbp1/cbp80 and ncbp2/cbp20 that interacts with m7GpppG-capped RNA. Component of an alternative nuclear cap-binding complex (CBC) composed of ncbp1/cbp80 and ncbp3.

The protein localises to the nucleus. Its subcellular location is the cytoplasm. In terms of biological role, component of the cap-binding complex (CBC), which binds cotranscriptionally to the 5'-cap of pre-mRNAs and is involved in various processes such as pre-mRNA splicing, translation regulation, nonsense-mediated mRNA decay, RNA-mediated gene silencing (RNAi) by microRNAs (miRNAs) and mRNA export. The CBC complex is involved in mRNA export from the nucleus, leading to the recruitment of the mRNA export machinery to the 5'-end of mRNA and to mRNA export in a 5' to 3' direction through the nuclear pore. The CBC complex is also involved in mediating U snRNA and intronless mRNAs export from the nucleus. The CBC complex is essential for a pioneer round of mRNA translation, before steady state translation when the CBC complex is replaced by cytoplasmic cap-binding protein eIF4E. The pioneer round of mRNA translation mediated by the CBC complex plays a central role in nonsense-mediated mRNA decay (NMD), NMD only taking place in mRNAs bound to the CBC complex, but not on eIF4E-bound mRNAs. The CBC complex enhances NMD in mRNAs containing at least one exon-junction complex (EJC), promoting the interaction between UPF1 and UPF2. The CBC complex is also involved in 'failsafe' NMD, which is independent of the EJC complex, while it does not participate in Staufen-mediated mRNA decay (SMD). During cell proliferation, the CBC complex is also involved in microRNAs (miRNAs) biogenesis via its interaction with SRRT/ARS2 and is required for miRNA-mediated RNA interference. The CBC complex also acts as a negative regulator of parn, thereby acting as an inhibitor of mRNA deadenylation. In the CBC complex, NCBP1/CBP80 does not bind directly capped RNAs (m7GpppG-capped RNA) but is required to stabilize the movement of the N-terminal loop of NCBP2/CBP20 and lock the CBC into a high affinity cap-binding state with the cap structure. Associates with NCBP3 to form an alternative cap-binding complex (CBC) which plays a key role in mRNA export. The conventional CBC with NCBP2 binds both small nuclear RNA (snRNA) and messenger (mRNA) and is involved in their export from the nucleus whereas the alternative CBC with NCBP3 does not bind snRNA and associates only with mRNA thereby playing a role only in mRNA export. The sequence is that of Nuclear cap-binding protein subunit 1-A (ncbp1-a) from Xenopus laevis (African clawed frog).